Reading from the N-terminus, the 991-residue chain is Envelope glycoprotein gp160 (991 aa).

Residues 1-106 (MTSKESKPSR…CLMWEMRKGN (106 aa)) form the signal peptide. At 107-840 (QCQAEEVIAL…WSSWFSWLKY (734 aa)) the chain is on the extracellular side. 22 N-linked (GlcNAc...) asparagine; by host glycosylation sites follow: N140, N161, N206, N258, N298, N364, N381, N387, N403, N435, N439, N470, N475, N481, N491, N501, N515, N527, N537, N542, N543, and N568. Residues 665–685 (GIGLVIVLAIMAIIAAAGAGL) form a fusion peptide region. The stretch at 697-747 (RTAVQSLANATAAQQEVLEASYAMVQHIAKGIRILEARVARVEALVDRMMV) forms a coiled coil. An N-linked (GlcNAc...) asparagine; by host glycan is attached at N705. The interval 731 to 747 (LEARVARVEALVDRMMV) is immunosuppression. N-linked (GlcNAc...) asparagine; by host glycans are attached at residues N773, N780, N796, and N830. Positions 788-823 (EEIEQHEGNLSLLLREAALQVHIAQRDARRIPDAWK) form a coiled coil. A helical transmembrane segment spans residues 841–861 (VPWIIMGIVGLICFRILMCVI). At 862–991 (SMCLQAYKQV…PTLENDYVEL (130 aa)) the chain is on the cytoplasmic side. The S-palmitoyl cysteine; by host moiety is linked to residue C864.

In terms of assembly, the mature envelope protein (Env) consists of a trimer of SU-TM heterodimers attached by noncovalent interactions or by a labile interchain disulfide bond. In terms of processing, specific enzymatic cleavages in vivo yield mature proteins. Envelope glycoproteins are synthesized as an inactive precursor that is N-glycosylated and processed likely by host cell furin or by a furin-like protease in the Golgi to yield the mature SU and TM proteins. The cleavage site between SU and TM requires the minimal sequence [KR]-X-[KR]-R. Post-translationally, the transmembrane protein is palmitoylated.

It is found in the virion membrane. The protein resides in the host cell membrane. In terms of biological role, the surface protein (SU) attaches the virus to the host cell by binding to its receptor. This interaction triggers the refolding of the transmembrane protein (TM) and is thought to activate its fusogenic potential by unmasking its fusion peptide. Fusion occurs at the host cell plasma membrane. Functionally, the transmembrane protein (TM) acts as a class I viral fusion protein. Under the current model, the protein has at least 3 conformational states: pre-fusion native state, pre-hairpin intermediate state, and post-fusion hairpin state. During viral and target cell membrane fusion, the coiled coil regions (heptad repeats) assume a trimer-of-hairpins structure, positioning the fusion peptide in close proximity to the C-terminal region of the ectodomain. The formation of this structure appears to drive apposition and subsequent fusion of viral and target cell membranes. Membranes fusion leads to delivery of the nucleocapsid into the cytoplasm. This Ovis aries (Sheep) protein is Envelope glycoprotein gp160 (env).